We begin with the raw amino-acid sequence, 208 residues long: V-type ATP synthase subunit D (208 aa).

Belongs to the V-ATPase D subunit family.

Produces ATP from ADP in the presence of a proton gradient across the membrane. The sequence is that of V-type ATP synthase subunit D from Chlamydia abortus (strain DSM 27085 / S26/3) (Chlamydophila abortus).